A 276-amino-acid chain; its full sequence is Bis(5'-nucleosyl)-tetraphosphatase, symmetrical (276 aa).

This sequence belongs to the Ap4A hydrolase family.

The enzyme catalyses P(1),P(4)-bis(5'-adenosyl) tetraphosphate + H2O = 2 ADP + 2 H(+). Its function is as follows. Hydrolyzes diadenosine 5',5'''-P1,P4-tetraphosphate to yield ADP. This is Bis(5'-nucleosyl)-tetraphosphatase, symmetrical from Legionella pneumophila (strain Corby).